Here is a 250-residue protein sequence, read N- to C-terminus: ATP synthase subunit a (250 aa).

Transmembrane regions (helical) follow at residues 29–49 (ASLF…FATS), 84–104 (FFPL…LGMF), 114–134 (IIVT…YGFY), 143–163 (VFVP…IEII), 193–213 (FVAS…LPLI), and 216–236 (VALT…FAVL).

This sequence belongs to the ATPase A chain family. In terms of assembly, F-type ATPases have 2 components, CF(1) - the catalytic core - and CF(0) - the membrane proton channel. CF(1) has five subunits: alpha(3), beta(3), gamma(1), delta(1), epsilon(1). CF(0) has three main subunits: a(1), b(2) and c(9-12). The alpha and beta chains form an alternating ring which encloses part of the gamma chain. CF(1) is attached to CF(0) by a central stalk formed by the gamma and epsilon chains, while a peripheral stalk is formed by the delta and b chains.

It localises to the cell inner membrane. Key component of the proton channel; it plays a direct role in the translocation of protons across the membrane. This Rhizobium etli (strain CIAT 652) protein is ATP synthase subunit a.